We begin with the raw amino-acid sequence, 376 residues long: Chaperone protein DnaJ (376 aa).

In terms of domain architecture, J spans 5-70; the sequence is DYYEVLGVAK…QKRAAYDQYG (66 aa). The segment at 136 to 214 adopts a CR-type zinc-finger fold; that stretch reads GYDTQIRVPS…CHGSGKVKET (79 aa). Zn(2+)-binding residues include Cys-149, Cys-152, Cys-166, Cys-169, Cys-188, Cys-191, Cys-202, and Cys-205. CXXCXGXG motif repeat units follow at residues 149–156, 166–173, 188–195, and 202–209; these read CEVCHGSG, CPTCHGQG, CPKCHGTG, and CAHCHGSG.

Belongs to the DnaJ family. In terms of assembly, homodimer. Zn(2+) serves as cofactor.

Its subcellular location is the cytoplasm. Participates actively in the response to hyperosmotic and heat shock by preventing the aggregation of stress-denatured proteins and by disaggregating proteins, also in an autonomous, DnaK-independent fashion. Unfolded proteins bind initially to DnaJ; upon interaction with the DnaJ-bound protein, DnaK hydrolyzes its bound ATP, resulting in the formation of a stable complex. GrpE releases ADP from DnaK; ATP binding to DnaK triggers the release of the substrate protein, thus completing the reaction cycle. Several rounds of ATP-dependent interactions between DnaJ, DnaK and GrpE are required for fully efficient folding. Also involved, together with DnaK and GrpE, in the DNA replication of plasmids through activation of initiation proteins. This chain is Chaperone protein DnaJ, found in Burkholderia multivorans (strain ATCC 17616 / 249).